Consider the following 1403-residue polypeptide: Baculoviral IAP repeat-containing protein 1a (1403 aa).

3 BIR repeats span residues 63–128 (RLKT…EFLQ), 162–228 (RLES…EFLQ), and 281–346 (RMDT…VFLQ). Residues Cys-315, Cys-318, His-335, and Cys-342 each contribute to the Zn(2+) site. Residues 464–758 (SVMCVEGETG…EFLAAMRLTE (295 aa)) enclose the NACHT domain. Lys-476 provides a ligand contact to ATP.

As to quaternary structure, interacts (via NACHT domain) with APAF1 (via CARD and NACHT domains).

Anti-apoptotic protein which acts by inhibiting the activities of CASP3, CASP7 and CASP9. Can inhibit the autocleavage of pro-CASP9 and cleavage of pro-CASP3 by CASP9. Capable of inhibiting CASP9 autoproteolysis at 'Asp-315' and decreasing the rate of auto proteolysis at 'Asp-330'. Acts as a mediator of neuronal survival in pathological conditions. Prevents motor-neuron apoptosis induced by a variety of signals. This chain is Baculoviral IAP repeat-containing protein 1a (Naip1), found in Mus musculus (Mouse).